We begin with the raw amino-acid sequence, 546 residues long: (+)-epi-alpha-bisabolol synthase (546 aa).

Mg(2+) contacts are provided by Asp-297, Asp-301, Asp-441, Thr-445, and Glu-449. A DDXXD motif motif is present at residues 297-301 (DDIYD).

It belongs to the terpene synthase family. Mg(2+) is required as a cofactor.

It carries out the reaction (2E,6E)-farnesyl diphosphate + H2O = (+)-epi-alpha-bisabolol + diphosphate. It functions in the pathway secondary metabolite biosynthesis; terpenoid biosynthesis. In terms of biological role, sesquiterpene synthase involved in the biosynthesis of (+)-epi-alpha-bisabolol, a precursor of the natural sweetner hernandulcin. This Phyla dulcis (Aztec sweet herb) protein is (+)-epi-alpha-bisabolol synthase.